Consider the following 550-residue polypeptide: Cyclopentanone 1,2-monooxygenase (550 aa).

FAD contacts are provided by residues 31–32, Asp51, Trp60, Asp71, Tyr77, and Val123; that span reads FT.

The protein belongs to the FAD-binding monooxygenase family. Homotetramer. The cofactor is FAD.

The enzyme catalyses cyclopentanone + NADPH + O2 + H(+) = 5-valerolactone + NADP(+) + H2O. The protein operates within alcohol metabolism; cyclopentanol degradation; 5-valerolactone from cyclopentanol: step 2/2. In terms of biological role, catalyzes a Baeyer-Villiger oxidation reaction, i.e. the insertion of an oxygen atom into a carbon-carbon bond adjacent to a carbonyl, which converts ketones to esters or lactones using NADPH as an electron donor. Converts cyclopentanone to 5-valerolactone, a step in the degradation pathway of cyclopentanol. Besides cycloalkanones, can also act on methylated and other alkylated cycloalkanones, and on methylated cycloalkenones, with high enantioselectivity in some cases. Cannot use NADH instead of NADPH. The sequence is that of Cyclopentanone 1,2-monooxygenase (cpnB) from Comamonas sp. (strain NCIMB 9872).